Here is a 444-residue protein sequence, read N- to C-terminus: Phosphoglucosamine mutase (444 aa).

Residue Ser-102 is the Phosphoserine intermediate of the active site. Residues Ser-102, Asp-241, Asp-243, and Asp-245 each contribute to the Mg(2+) site. Ser-102 is subject to Phosphoserine.

Belongs to the phosphohexose mutase family. Requires Mg(2+) as cofactor. Activated by phosphorylation.

It carries out the reaction alpha-D-glucosamine 1-phosphate = D-glucosamine 6-phosphate. Its function is as follows. Catalyzes the conversion of glucosamine-6-phosphate to glucosamine-1-phosphate. The protein is Phosphoglucosamine mutase of Leptothrix cholodnii (strain ATCC 51168 / LMG 8142 / SP-6) (Leptothrix discophora (strain SP-6)).